The sequence spans 438 residues: MSHEEDLIDYSDEEIQPTEVPANGDAAAAKGGLAAPDASGEKKGSYVGIHSTGFRDFLLKDELVRAITDCGFEHPSEVQQVTIPQAILGNDVLCQAKSGLGKTAVFVLATLQQMDEKPEPGVASILVMCHTRELAYQIRNEYNRFAKFLPDVKVGVFYGGTPVAKDIELLSNKDTHPHIIVGTPGRINALVRDRHLRLANLKHFVLDECDKMLDQPDMRNDVQAIFRATPAHKQVMMFSATLSKEIRAVCKKFMQNPLEIYVDDEKKLTLHGLQQFYVKLDEREKNRKLNDLLDNLEFNQVIIFVRSTLRCTELDKLLRECNFPSTAVHSGIGQEERIKRYKEFKEFQTRICVSTDIFGRGIDVERINVAINYDMPDKADAYLHRVGRAGRFGTKGLSISFVSSQDDEAVLKAIEERFAAEIPEFPEDGISSASYMDN.

Acidic residues predominate over residues 1-16; the sequence is MSHEEDLIDYSDEEIQ. Positions 1–41 are disordered; the sequence is MSHEEDLIDYSDEEIQPTEVPANGDAAAAKGGLAAPDASGE. Positions 21-38 are enriched in low complexity; sequence PANGDAAAAKGGLAAPDA. Residues 52–80 carry the Q motif motif; that stretch reads TGFRDFLLKDELVRAITDCGFEHPSEVQQ. Residues 83–260 enclose the Helicase ATP-binding domain; the sequence is IPQAILGNDV…KKFMQNPLEI (178 aa). 96-103 lines the ATP pocket; that stretch reads AKSGLGKT. Residues 207 to 210 carry the DEAD box motif; it reads DECD. One can recognise a Helicase C-terminal domain in the interval 288 to 433; sequence KLNDLLDNLE…EFPEDGISSA (146 aa).

It belongs to the DEAD box helicase family. DECD subfamily.

The protein resides in the nucleus. It carries out the reaction ATP + H2O = ADP + phosphate + H(+). Functionally, ATP-binding RNA helicase involved in transcription elongation and required for the export of mRNA out of the nucleus. SUB2 also plays a role in pre-mRNA splicing and spliceosome assembly. May be involved in rDNA and telomeric silencing, and maintenance of genome integrity. This is ATP-dependent RNA helicase SUB2 (SUB2) from Phaeosphaeria nodorum (strain SN15 / ATCC MYA-4574 / FGSC 10173) (Glume blotch fungus).